A 298-amino-acid polypeptide reads, in one-letter code: Ribosomal RNA small subunit methyltransferase A (298 aa).

S-adenosyl-L-methionine is bound by residues Asn-35, Leu-37, Gly-62, Glu-83, Asp-108, and Asn-133.

The protein belongs to the class I-like SAM-binding methyltransferase superfamily. rRNA adenine N(6)-methyltransferase family. RsmA subfamily.

The protein resides in the cytoplasm. The enzyme catalyses adenosine(1518)/adenosine(1519) in 16S rRNA + 4 S-adenosyl-L-methionine = N(6)-dimethyladenosine(1518)/N(6)-dimethyladenosine(1519) in 16S rRNA + 4 S-adenosyl-L-homocysteine + 4 H(+). Its function is as follows. Specifically dimethylates two adjacent adenosines (A1518 and A1519) in the loop of a conserved hairpin near the 3'-end of 16S rRNA in the 30S particle. May play a critical role in biogenesis of 30S subunits. In Streptococcus pyogenes serotype M4 (strain MGAS10750), this protein is Ribosomal RNA small subunit methyltransferase A.